A 60-amino-acid chain; its full sequence is Protein translocase subunit SecE (60 aa).

Residues 37–57 (LLGFALVGGIGYLIHLGYIIL) form a helical membrane-spanning segment.

This sequence belongs to the SecE/SEC61-gamma family. As to quaternary structure, component of the Sec protein translocase complex. Heterotrimer consisting of SecY (alpha), SecG (beta) and SecE (gamma) subunits. The heterotrimers can form oligomers, although 1 heterotrimer is thought to be able to translocate proteins. Interacts with the ribosome. May interact with SecDF, and other proteins may be involved.

It is found in the cell membrane. Its function is as follows. Essential subunit of the Sec protein translocation channel SecYEG. Clamps together the 2 halves of SecY. May contact the channel plug during translocation. This Aeropyrum pernix (strain ATCC 700893 / DSM 11879 / JCM 9820 / NBRC 100138 / K1) protein is Protein translocase subunit SecE.